Consider the following 87-residue polypeptide: UPF0250 protein ECA1299 (87 aa).

This sequence belongs to the UPF0250 family.

In Pectobacterium atrosepticum (strain SCRI 1043 / ATCC BAA-672) (Erwinia carotovora subsp. atroseptica), this protein is UPF0250 protein ECA1299.